The primary structure comprises 724 residues: MQGSKGVENPAFVPSSPDTPRRASASPSQVEVSAVASRNQNGGSQPRESEDPQKSTEPSPPSSTLPASDEPPGSQLSELEEGPCGWRNFHPQCLQRCNNPKGFLLHYCLLALTQGIVVNGLVNISISTIEKRYEMKSSLTGLISSSYDISFCVLSLFVSFFGERGHKPRWLAFASFMIGLGALVFSLPHFFSGRYELGTIFEDTCLTRNSTRCASSTSLLSNYFYVFVLGQLLLGTGGTPLYTLGTAFIDDSVPTHKSSLYIGIGYSMSILGPAIGYVLGGQLLTMYIDVAMGQSSDLTEDDPRWLGAWWIGFLLAWLFAWSLIMPFSCFPKHLPGTAKIQAGKTSQTHQNNSTSFQHMDENFGKSIKDFPTAVKNLMRNTVFICLVLSTTSEALVTTGFATFLPKFIENQFGLTSSFAATLGGAVLIPGAALGQILGGVLVSKFKMKCKNTMKFALCTSGVALMLSFVFIYAKCENGPFAGVSESYNGTGEMGNLTAPCNANCNCLRSYYYPLCGSDGVQYFSPCFAGCLNSVSNRKPKAYYNCSCIERKVDITSTAXSPDFEARAGKCKTQCSNLPIFLGIFFITVIFTFMAGTPITVSILRCVNHRQRSLALGVQFMLLRLLGTIPGPIIFGVTIDSTCVLWDINECGTKGACWIYDNIRMAHMLVAISVTCKVITIFFNGLAIVLYKPPPPGTEVSFQSQNVVVSTITVEEDLNKIENEG.

The disordered stretch occupies residues M1–E80. Over M1–K101 the chain is Cytoplasmic. A phosphoserine mark is found at S15 and S16. T19 carries the phosphothreonine modification. Residues S24, S26, and S28 each carry the phosphoserine modification. Over residues A25–P46 the composition is skewed to polar residues. The chain crosses the membrane as a helical span at residues G102 to V122. Residues N123–G141 are Extracellular-facing. Residues L142–G162 traverse the membrane as a helical segment. Over E163 to P168 the chain is Cytoplasmic. The helical transmembrane segment at R169 to G193 threads the bilayer. At R194–S218 the chain is on the extracellular side. A helical transmembrane segment spans residues L219–I249. Residues D250–S269 are Cytoplasmic-facing. Residues I270–V290 traverse the membrane as a helical segment. At A291–L306 the chain is on the extracellular side. The chain crosses the membrane as a helical span at residues G307–P331. The Cytoplasmic segment spans residues K332–N376. A helical transmembrane segment spans residues L377–T398. At G399–F418 the chain is on the extracellular side. The chain crosses the membrane as a helical span at residues A419 to V442. Residues S443–K446 are Cytoplasmic-facing. The helical transmembrane segment at M447–F470 threads the bilayer. At I471–F580 the chain is on the extracellular side. Residues G494–E549 form the Kazal-like domain. 3 disulfides stabilise this stretch: C500/C530, C506/C526, and C515/C547. Residues L581–L603 traverse the membrane as a helical segment. Topologically, residues R604–S612 are cytoplasmic. The helical transmembrane segment at L613–I638 threads the bilayer. The Extracellular segment spans residues D639–S672. The helical transmembrane segment at V673 to Y690 threads the bilayer. Residues K691–G724 lie on the Cytoplasmic side of the membrane.

The protein belongs to the organo anion transporter (TC 2.A.60) family. As to expression, predominantly expressed in kidney and lung but also weakly expressed in brain. Localizes primarily in the proximal straight tubules, the S3 fraction of the nephron.

The protein localises to the basolateral cell membrane. The protein resides in the apical cell membrane. The catalysed reaction is estrone 3-sulfate(out) = estrone 3-sulfate(in). It catalyses the reaction L-thyroxine(out) = L-thyroxine(in). It carries out the reaction 3,3',5-triiodo-L-thyronine(out) = 3,3',5-triiodo-L-thyronine(in). The enzyme catalyses chenodeoxycholate(out) = chenodeoxycholate(in). The catalysed reaction is glycocholate(out) = glycocholate(in). It catalyses the reaction L-homoarginine(in) = L-homoarginine(out). It carries out the reaction L-arginine(in) = L-arginine(out). The enzyme catalyses N(omega),N(omega)-dimethyl-L-arginine(out) = N(omega),N(omega)-dimethyl-L-arginine(in). Functionally, mediates the transport of organic anions such as steroids (estrone 3-sulfate, chenodeoxycholate, glycocholate) and thyroid hormones (3,3',5-triiodo-L-thyronine (T3), L-thyroxine (T4)), in the kidney. Capable of transporting cAMP and pharmacological substances such as digoxin, ouabain and methotrexate. Transport is independent of sodium, chloride ion, and ATP. Transport activity is stimulated by an acidic extracellular environment due to increased substrate affinity to the transporter. The driving force for this transport activity is currently not known. The role of hydrogencarbonate (HCO3(-), bicarbonate) as the probable counteranion that exchanges for organic anions is still not well defined. Functions as an uptake transporter at the apical membrane, suggesting a role in renal reabsorption. Involved in the renal secretion of the uremic toxin ADMA (N(omega),N(omega)-dimethyl-L-arginine or asymmetrical dimethylarginine), which is associated to cardiovascular events and mortality, and the structurally related amino acids L-arginine and L-homoarginine (a cardioprotective biomarker). Can act bidirectionally, suggesting a dual protective role of this transport protein; exporting L-homoarginine after being synthesized in proximal tubule cells, and mediating uptake of ADMA from the blood into proximal tubule cells where it is degraded by the enzyme dimethylarginine dimethylaminohydrolase 1 (DDAH1). May be involved in sperm maturation by enabling directed movement of organic anions and compounds within or between cells. This ion-transporting process is important to maintain the strict epididymal homeostasis necessary for sperm maturation. May have a role in secretory functions since seminal vesicle epithelial cells are assumed to secrete proteins involved in decapacitation by modifying surface proteins to facilitate the acquisition of the ability to fertilize the egg. The chain is Solute carrier organic anion transporter family member 4C1 from Rattus norvegicus (Rat).